The sequence spans 243 residues: MENLNLNKHISGQFNAELENIRTQVLSMGGLVEQQLTDAITAMHNQDSELATRVIEGDSKVNLMEVTIDEACVRIIAKRQPTASDLRLVMAIIKTISELERIGDVADKICRTALEKFSHQHQPLLVSLESLGRHTVQMLHDVLDAFARMDLDEAIRIYREDKKVDKEYEGIVRQLMTHMMEDSRTIPSVLTALFCARSIERIGDRCQNICEFIFYFVKGQDVRHMGGDALEKLLIASDXKKAK.

It belongs to the PhoU family. As to quaternary structure, homodimer.

It localises to the cytoplasm. Its function is as follows. Part of the phosphate (Pho) regulon, which plays a key role in phosphate homeostasis. Encoded together with proteins of the phosphate-specific transport (Pst) system in the polycistronic pstSCAB-phoU operon. PhoU is essential for the repression of the Pho regulon at high phosphate conditions. In this role, it may bind, possibly as a chaperone, to PhoR, PhoB or a PhoR-PhoB complex to promote dephosphorylation of phospho-PhoB, or inhibit formation of the PhoR-PhoB transitory complex. The polypeptide is Phosphate-specific transport system accessory protein PhoU (Serratia marcescens).